The sequence spans 67 residues: Penaeidin-4c (67 aa).

The first 19 residues, 1 to 19, serve as a signal peptide directing secretion; that stretch reads MRLVVCLVFLASFALVCQG. Intrachain disulfides connect Cys-42–Cys-56, Cys-45–Cys-63, and Cys-57–Cys-64. Residue Arg-66 is modified to Arginine amide.

The protein belongs to the penaeidin family.

The protein localises to the cytoplasmic granule. In terms of biological role, antibacterial and antifungal activity. Presents chitin-binding activity. In Penaeus vannamei (Whiteleg shrimp), this protein is Penaeidin-4c.